Consider the following 274-residue polypeptide: Acetyl-coenzyme A carboxylase carboxyl transferase subunit alpha (274 aa).

A CoA carboxyltransferase C-terminal domain is found at 2-250 (NKEFIKSIVV…KKEIMNAMNE (249 aa)).

Belongs to the AccA family. In terms of assembly, acetyl-CoA carboxylase is a heterohexamer composed of biotin carboxyl carrier protein (AccB), biotin carboxylase (AccC) and two subunits each of ACCase subunit alpha (AccA) and ACCase subunit beta (AccD).

It localises to the cytoplasm. It catalyses the reaction N(6)-carboxybiotinyl-L-lysyl-[protein] + acetyl-CoA = N(6)-biotinyl-L-lysyl-[protein] + malonyl-CoA. Its pathway is lipid metabolism; malonyl-CoA biosynthesis; malonyl-CoA from acetyl-CoA: step 1/1. Its function is as follows. Component of the acetyl coenzyme A carboxylase (ACC) complex. First, biotin carboxylase catalyzes the carboxylation of biotin on its carrier protein (BCCP) and then the CO(2) group is transferred by the carboxyltransferase to acetyl-CoA to form malonyl-CoA. The polypeptide is Acetyl-coenzyme A carboxylase carboxyl transferase subunit alpha (Clostridium botulinum (strain Alaska E43 / Type E3)).